A 190-amino-acid polypeptide reads, in one-letter code: uncharacterized protein (190 aa).

This is an uncharacterized protein from Acidianus hospitalis (AFV-1).